Reading from the N-terminus, the 599-residue chain is Elongation factor 4 (599 aa).

The 183-residue stretch at lysine 2–glutamate 184 folds into the tr-type G domain. Residues aspartate 14 to threonine 19 and asparagine 131 to aspartate 134 contribute to the GTP site.

The protein belongs to the TRAFAC class translation factor GTPase superfamily. Classic translation factor GTPase family. LepA subfamily.

The protein localises to the cell inner membrane. The catalysed reaction is GTP + H2O = GDP + phosphate + H(+). Required for accurate and efficient protein synthesis under certain stress conditions. May act as a fidelity factor of the translation reaction, by catalyzing a one-codon backward translocation of tRNAs on improperly translocated ribosomes. Back-translocation proceeds from a post-translocation (POST) complex to a pre-translocation (PRE) complex, thus giving elongation factor G a second chance to translocate the tRNAs correctly. Binds to ribosomes in a GTP-dependent manner. In Escherichia coli (strain SE11), this protein is Elongation factor 4.